Reading from the N-terminus, the 552-residue chain is DNA ligase (552 aa).

Glu229 contacts ATP. The active-site N6-AMP-lysine intermediate is the Lys231. The ATP site is built by Arg236 and Glu283. Positions 283 and 377 each coordinate Mg(2+). ATP-binding residues include Lys382 and Lys397.

The protein belongs to the ATP-dependent DNA ligase family. Interacts with host TOP2A and TOP2B. The cofactor is Mg(2+).

It is found in the host cytoplasm. It carries out the reaction ATP + (deoxyribonucleotide)n-3'-hydroxyl + 5'-phospho-(deoxyribonucleotide)m = (deoxyribonucleotide)n+m + AMP + diphosphate.. DNA ligase that seals nicks in double-stranded DNA during DNA replication, DNA recombination and DNA repair. Recruits cellular topoisomerase II to sites of viral replication and assembly. Contributes to the repair of the viral genome following UV irradiation. The protein is DNA ligase (OPG180) of Vaccinia virus (strain Western Reserve) (VACV).